The chain runs to 734 residues: Photosystem I P700 chlorophyll a apoprotein A2 (734 aa).

Transmembrane regions (helical) follow at residues 46 to 69, 135 to 158, 175 to 199, 273 to 291, 330 to 353, 369 to 395, 417 to 439, and 517 to 535; these read IFASHFGQLAIIFLWTSGNLFHVA, LYTGALFLLFLSAISLIAGWLHLQ, LNHHLSGLFGVSSLAWTGHLVHVAI, IAHHHLAIAFLFLVAGHMY, IHFQLGLALASLGVITSLVAQHMY, AALYTHHQYIAGFIMTGAFAHGAIFFI, AIKSHLSWVSLFLGFHTLGLYVH, and FLVHHAIALGLHTTTLILV. Residues cysteine 559 and cysteine 568 each contribute to the [4Fe-4S] cluster site. A run of 2 helical transmembrane segments spans residues 575-596 and 643-665; these read AFYLAVFWMLNTIGWVTFYWHW and LSVWAWMFLFGHLVWATGFMFLI. Residues histidine 654, methionine 662, and tyrosine 670 each contribute to the chlorophyll a site. Residue tryptophan 671 coordinates phylloquinone. The chain crosses the membrane as a helical span at residues 707-727; the sequence is LVGLAHFSVGYIFTYAAFLIA.

It belongs to the PsaA/PsaB family. In terms of assembly, the PsaA/B heterodimer binds the P700 chlorophyll special pair and subsequent electron acceptors. PSI consists of a core antenna complex that captures photons, and an electron transfer chain that converts photonic excitation into a charge separation. The eukaryotic PSI reaction center is composed of at least 11 subunits. P700 is a chlorophyll a/chlorophyll a' dimer, A0 is one or more chlorophyll a, A1 is one or both phylloquinones and FX is a shared 4Fe-4S iron-sulfur center. serves as cofactor.

The protein resides in the plastid. It is found in the chloroplast thylakoid membrane. The catalysed reaction is reduced [plastocyanin] + hnu + oxidized [2Fe-2S]-[ferredoxin] = oxidized [plastocyanin] + reduced [2Fe-2S]-[ferredoxin]. PsaA and PsaB bind P700, the primary electron donor of photosystem I (PSI), as well as the electron acceptors A0, A1 and FX. PSI is a plastocyanin-ferredoxin oxidoreductase, converting photonic excitation into a charge separation, which transfers an electron from the donor P700 chlorophyll pair to the spectroscopically characterized acceptors A0, A1, FX, FA and FB in turn. Oxidized P700 is reduced on the lumenal side of the thylakoid membrane by plastocyanin. The polypeptide is Photosystem I P700 chlorophyll a apoprotein A2 (Drimys granadensis).